The sequence spans 237 residues: Speedy protein E4 (237 aa).

The disordered stretch occupies residues 1-61 (MASGQARPPF…KRKSEWSDES (61 aa)).

Belongs to the Speedy/Ringo family. As to expression, predominantly expressed in testis.

This is Speedy protein E4 from Homo sapiens (Human).